A 354-amino-acid chain; its full sequence is Cysteine proteinase 1 (354 aa).

The first 24 residues, 1–24 (MARRNPLLFAIVVTILFVVCYGSA), serve as a signal peptide directing secretion. A propeptide spans 25–125 (LIAQTPPPVD…HKEDVHVDDS (101 aa)) (activation peptide). Disulfide bonds link C150-C191, C184-C229, and C282-C330. C153 is an active-site residue. An N-linked (GlcNAc...) asparagine glycan is attached at N208. Active-site residues include H289 and N309.

It belongs to the peptidase C1 family.

Its function is as follows. The cysteine proteinases have a potential role in host-parasite interaction and virulence. In Leishmania pifanoi, this protein is Cysteine proteinase 1 (CYS1).